The sequence spans 299 residues: tRNA dimethylallyltransferase (299 aa).

13–20 (GPTASGKT) lines the ATP pocket. A substrate-binding site is contributed by 15–20 (TASGKT). Residues 38–41 (DSRQ) are interaction with substrate tRNA.

This sequence belongs to the IPP transferase family. Monomer. It depends on Mg(2+) as a cofactor.

The catalysed reaction is adenosine(37) in tRNA + dimethylallyl diphosphate = N(6)-dimethylallyladenosine(37) in tRNA + diphosphate. In terms of biological role, catalyzes the transfer of a dimethylallyl group onto the adenine at position 37 in tRNAs that read codons beginning with uridine, leading to the formation of N6-(dimethylallyl)adenosine (i(6)A). This chain is tRNA dimethylallyltransferase, found in Prochlorococcus marinus (strain MIT 9301).